Consider the following 884-residue polypeptide: Alanine--tRNA ligase (884 aa).

Zn(2+) is bound by residues His-572, His-576, Cys-673, and His-677.

The protein belongs to the class-II aminoacyl-tRNA synthetase family. Requires Zn(2+) as cofactor.

The protein localises to the cytoplasm. The enzyme catalyses tRNA(Ala) + L-alanine + ATP = L-alanyl-tRNA(Ala) + AMP + diphosphate. Functionally, catalyzes the attachment of alanine to tRNA(Ala) in a two-step reaction: alanine is first activated by ATP to form Ala-AMP and then transferred to the acceptor end of tRNA(Ala). Also edits incorrectly charged Ser-tRNA(Ala) and Gly-tRNA(Ala) via its editing domain. The chain is Alanine--tRNA ligase from Xylella fastidiosa (strain 9a5c).